The sequence spans 936 residues: Bifunctional uridylyltransferase/uridylyl-removing enzyme (936 aa).

Residues 1-372 form a uridylyltransferase region; sequence MTIPRIRQPR…SIATLLMRKR (372 aa). Residues 373 to 727 form a uridylyl-removing region; sequence NLGDFVLDGG…VLPDPERAVS (355 aa). The region spanning 488–610 is the HD domain; it reads TDEHTIRAIG…VQSVERLHLL (123 aa). 2 ACT domains span residues 728–809 and 840–915; these read EVLV…KALR and VIEI…TVPR. Residues 915-930 show a composition bias toward basic and acidic residues; sequence RKVEEGAEQGAEKADA. The interval 915–936 is disordered; it reads RKVEEGAEQGAEKADAGEIVAA.

The protein belongs to the GlnD family. Requires Mg(2+) as cofactor.

The enzyme catalyses [protein-PII]-L-tyrosine + UTP = [protein-PII]-uridylyl-L-tyrosine + diphosphate. The catalysed reaction is [protein-PII]-uridylyl-L-tyrosine + H2O = [protein-PII]-L-tyrosine + UMP + H(+). Uridylyltransferase (UTase) activity is inhibited by glutamine, while glutamine activates uridylyl-removing (UR) activity. In terms of biological role, modifies, by uridylylation and deuridylylation, the PII regulatory proteins (GlnB and homologs), in response to the nitrogen status of the cell that GlnD senses through the glutamine level. Under low glutamine levels, catalyzes the conversion of the PII proteins and UTP to PII-UMP and PPi, while under higher glutamine levels, GlnD hydrolyzes PII-UMP to PII and UMP (deuridylylation). Thus, controls uridylylation state and activity of the PII proteins, and plays an important role in the regulation of nitrogen fixation and metabolism. This is Bifunctional uridylyltransferase/uridylyl-removing enzyme from Rhodospirillum rubrum (strain ATCC 11170 / ATH 1.1.1 / DSM 467 / LMG 4362 / NCIMB 8255 / S1).